We begin with the raw amino-acid sequence, 562 residues long: Potassium-transporting ATPase potassium-binding subunit (562 aa).

A run of 12 helical transmembrane segments spans residues 5-25 (AFLL…PLGS), 63-83 (AAAI…LLMA), 132-152 (GLTV…FALI), 175-195 (LYVL…QGVL), 250-270 (LSNI…CFAF), 279-299 (QGHA…AVVM), 327-347 (FGVL…TGAV), 356-376 (ALGG…FGGV), 379-399 (GLYG…LMIG), 416-436 (MTAL…ALAL), 483-503 (VLLA…VLAI), and 526-546 (LFIG…FIPA).

This sequence belongs to the KdpA family. In terms of assembly, the system is composed of three essential subunits: KdpA, KdpB and KdpC.

It is found in the cell inner membrane. Functionally, part of the high-affinity ATP-driven potassium transport (or Kdp) system, which catalyzes the hydrolysis of ATP coupled with the electrogenic transport of potassium into the cytoplasm. This subunit binds the periplasmic potassium ions and delivers the ions to the membrane domain of KdpB through an intramembrane tunnel. This is Potassium-transporting ATPase potassium-binding subunit from Pectobacterium carotovorum subsp. carotovorum (strain PC1).